The following is a 684-amino-acid chain: Ski-like protein (684 aa).

Glycyl lysine isopeptide (Lys-Gly) (interchain with G-Cter in SUMO2) cross-links involve residues Lys-50 and Lys-70. Residues Ser-420 to Pro-454 form a disordered region. Position 452 is a phosphoserine (Ser-452). Residues Lys-489 and Lys-527 each participate in a glycyl lysine isopeptide (Lys-Gly) (interchain with G-Cter in SUMO2) cross-link. Positions Arg-536–Glu-684 form a coiled coil.

This sequence belongs to the SKI family. In terms of assembly, interacts with CPNE4 (via VWFA domain). Interacts with SMAD2, SMAD3 and RNF111. Isoform 1 interacts with WWP1. In terms of processing, ubiquitinated by RNF111 and ARK2C, promoting proteasomal degradation, leading to enhance the BMP-Smad signaling. Isoform SNON and isoform SNOA are widely expressed. Highest expression is found in skeletal muscle, followed by placenta and lung. Lowest expression in heart, brain and pancreas. Isoform SNOI expression is restricted to skeletal muscle.

May have regulatory role in cell division or differentiation in response to extracellular signals. The polypeptide is Ski-like protein (SKIL) (Homo sapiens (Human)).